A 229-amino-acid polypeptide reads, in one-letter code: Transmembrane protein 182 (229 aa).

The N-terminal stretch at 1 to 26 (MRLNIAIFFGALFGALGVLLFLVAFG) is a signal peptide. The Extracellular portion of the chain corresponds to 27 to 114 (SDYWLLATEV…SYDSAVIYRG (88 aa)). Asparagine 47 carries an N-linked (GlcNAc...) asparagine glycan. The interaction with ITGB1 stretch occupies residues 49-59 (TFHHEGFFWRC). Asparagine 102 carries an N-linked (GlcNAc...) asparagine glycan. The helical transmembrane segment at 115 to 135 (FWAVLMLLGVVAVVIASFLII) threads the bilayer. At 136 to 153 (CAAPFASHFLYKAGGGSY) the chain is on the cytoplasmic side. Residues 154–174 (IAAGILFSLVVMLYVIWVQAV) traverse the membrane as a helical segment. Residues 175-200 (ADMESYRNMKMKDCLDFTPSVLYGWS) lie on the Extracellular side of the membrane. Residues 201–221 (FFLAPAGIFFSLLAGLLFLVV) traverse the membrane as a helical segment. Topologically, residues 222–229 (GWHIQIHH) are cytoplasmic.

Belongs to the TMEM182 family. Interacts with ITGB1.

The protein resides in the cell membrane. In terms of biological role, negatively regulates myogenesis and skeletal muscle regeneration via its association with ITGB1. Modulates ITGB1 activation by decreasing ITGB1-LAMB1 interaction and inhibiting ITGB1-mediated intracellular signaling during myogenesis. The sequence is that of Transmembrane protein 182 (TMEM182) from Homo sapiens (Human).